The primary structure comprises 229 residues: Small ribosomal subunit protein uS3c (229 aa).

In terms of domain architecture, KH type-2 spans 39-128 (LRDNLFKQYP…RIILTILKVQ (90 aa)).

It belongs to the universal ribosomal protein uS3 family. Part of the 30S ribosomal subunit.

The protein localises to the plastid. It is found in the chloroplast. The sequence is that of Small ribosomal subunit protein uS3c (rps3) from Tupiella akineta (Green alga).